A 637-amino-acid polypeptide reads, in one-letter code: Biosynthetic arginine decarboxylase (637 aa).

Residue Lys101 is modified to N6-(pyridoxal phosphate)lysine. 286–296 is a binding site for substrate; it reads FDVGGGLAVDY.

The protein belongs to the Orn/Lys/Arg decarboxylase class-II family. SpeA subfamily. Mg(2+) serves as cofactor. Pyridoxal 5'-phosphate is required as a cofactor.

It catalyses the reaction L-arginine + H(+) = agmatine + CO2. Its pathway is amine and polyamine biosynthesis; agmatine biosynthesis; agmatine from L-arginine: step 1/1. In terms of biological role, catalyzes the biosynthesis of agmatine from arginine. The polypeptide is Biosynthetic arginine decarboxylase (Shewanella sp. (strain MR-7)).